A 497-amino-acid polypeptide reads, in one-letter code: Carboxypeptidase Y homolog ARB_02032 (497 aa).

Positions 1 to 18 (MRFTQIVAAALCLGATEA) are cleaved as a signal peptide. Asn88 carries an N-linked (GlcNAc...) asparagine glycan. Ser204 is an active-site residue. 2 N-linked (GlcNAc...) asparagine glycosylation sites follow: Asn263 and Asn393. The active site involves Asp403. N-linked (GlcNAc...) asparagine glycosylation occurs at Asn417. Residue His469 is part of the active site.

This sequence belongs to the peptidase S10 family.

It localises to the secreted. It carries out the reaction Release of a C-terminal amino acid with broad specificity.. Functionally, involved in degradation of small peptides. In Arthroderma benhamiae (strain ATCC MYA-4681 / CBS 112371) (Trichophyton mentagrophytes), this protein is Carboxypeptidase Y homolog ARB_02032.